The sequence spans 251 residues: Hydroxyacylglutathione hydrolase (251 aa).

Residues His53, His55, Asp57, His58, His110, Asp127, and His165 each contribute to the Zn(2+) site.

Belongs to the metallo-beta-lactamase superfamily. Glyoxalase II family. Monomer. Requires Zn(2+) as cofactor.

It carries out the reaction an S-(2-hydroxyacyl)glutathione + H2O = a 2-hydroxy carboxylate + glutathione + H(+). It functions in the pathway secondary metabolite metabolism; methylglyoxal degradation; (R)-lactate from methylglyoxal: step 2/2. Functionally, thiolesterase that catalyzes the hydrolysis of S-D-lactoyl-glutathione to form glutathione and D-lactic acid. This Citrobacter koseri (strain ATCC BAA-895 / CDC 4225-83 / SGSC4696) protein is Hydroxyacylglutathione hydrolase.